The chain runs to 178 residues: Protein modigliani (178 aa).

Probably homodimerizes. Component of the MTV complex, composed of moi/modigliani, tea and ver/verrocchio. Interacts with ver/verrochio and tea (via C-terminus); the interactions are direct and require fully intact moi/modigliani and ver/verrocchio. The MTV complex is recruited to telomeres by the HipHop-HOAP complex, consisting of HipHop, cav/HOAP and Su(var)205/HP1 to form the terminin telomere-capping complex. Interacts with cav/HOAP and Su(var)205/HP1; the interactions are direct. Probably interacts with peo (via N-terminus and UBC domain).

Its subcellular location is the nucleus. It localises to the chromosome. The protein resides in the telomere. Its function is as follows. Part of the MTV complex that associates with the HipHop-HOAP complex to form the terminin telomere-capping complex involved in telomere maintenance and prevention of telomere fusion. Potentially functions downstream of mei-41/ATR. As part of the MTV complex binds single stranded DNA in a sequence-independent manner, protecting it from degradation. The chain is Protein modigliani from Drosophila melanogaster (Fruit fly).